The primary structure comprises 216 residues: Acetate CoA-transferase subunit beta (216 aa).

E46 is an active-site residue.

This sequence belongs to the 3-oxoacid CoA-transferase subunit B family. In terms of assembly, heterotetramer composed of two alpha subunits (AtoD) and two beta subunits (AtoA).

The protein localises to the cytoplasm. The catalysed reaction is an acyl-CoA + acetate = a carboxylate + acetyl-CoA. It catalyses the reaction acetoacetate + acetyl-CoA = acetoacetyl-CoA + acetate. It carries out the reaction butanoate + acetyl-CoA = butanoyl-CoA + acetate. The enzyme catalyses acetoacetate + butanoyl-CoA = acetoacetyl-CoA + butanoate. Its pathway is lipid metabolism; short-chain fatty acid metabolism. Inhibited by p-chloromercuribenzoate. Functionally, coenzyme A transferase which is involved in short-chain fatty acid degradation and catalyzes the activation of short-chain fatty acids to their respective CoA thiolesters. During acetoacetate degradation, catalyzes the transfer of CoA from acetyl-CoA to acetoacetate by a mechanism involving a covalent enzyme-CoA compound as a reaction intermediate. Utilizes a variety of short chain acyl-CoA and carboxylic acid substrates but exhibits maximal activity with normal and 3-keto substrates. In Escherichia coli (strain K12), this protein is Acetate CoA-transferase subunit beta.